Consider the following 149-residue polypeptide: 3-hydroxyacyl-[acyl-carrier-protein] dehydratase FabZ (149 aa).

H53 is a catalytic residue.

Belongs to the thioester dehydratase family. FabZ subfamily.

The protein localises to the cytoplasm. The enzyme catalyses a (3R)-hydroxyacyl-[ACP] = a (2E)-enoyl-[ACP] + H2O. Its function is as follows. Involved in unsaturated fatty acids biosynthesis. Catalyzes the dehydration of short chain beta-hydroxyacyl-ACPs and long chain saturated and unsaturated beta-hydroxyacyl-ACPs. The polypeptide is 3-hydroxyacyl-[acyl-carrier-protein] dehydratase FabZ (Neisseria meningitidis serogroup B (strain ATCC BAA-335 / MC58)).